The sequence spans 563 residues: BOS complex subunit NCLN (563 aa).

The signal sequence occupies residues 1–42 (MLEEAGEVLENVLKASCLPLGFIVFLPAVLLLVAPPLPAADA). At 43-522 (AHEFTVYRMQ…VMNAYRVKPA (480 aa)) the chain is on the lumenal side. N-linked (GlcNAc...) asparagine glycosylation is found at N241 and N428. The helical transmembrane segment at 523 to 543 (IFDLLLALCIGAYLGMAYTAV) threads the bilayer. The Cytoplasmic segment spans residues 544-563 (QHFHVLYKTVQRLLLKAKAQ).

Belongs to the nicastrin family. Component of the back of Sec61 (BOS) complex, composed of NCLN/Nicalin, NOMO1 and TMEM147. The BOS complex is part of the multi-pass translocon (MPT) complex, composed of three subcomplexes, the GEL complex (composed of RAB5IF/OPTI and TMCO1), the BOS complex (composed of NCLN/Nicalin, NOMO1 and TMEM147) and the PAT complex (composed of WDR83OS/Asterix and CCDC47). The MPT complex associates with the SEC61 complex.

It is found in the endoplasmic reticulum membrane. Component of the multi-pass translocon (MPT) complex that mediates insertion of multi-pass membrane proteins into the lipid bilayer of membranes. The MPT complex takes over after the SEC61 complex: following membrane insertion of the first few transmembrane segments of proteins by the SEC61 complex, the MPT complex occludes the lateral gate of the SEC61 complex to promote insertion of subsequent transmembrane regions. May antagonize Nodal signaling and subsequent organization of axial structures during mesodermal patterning, via its interaction with NOMO. This is BOS complex subunit NCLN (Ncln) from Mus musculus (Mouse).